The following is an 82-amino-acid chain: MLGFGPFELILIVVIIALLFGARKLPELGKGMGRGIKEFKQEMHEPSPPRPQVTDIPSQRLDPVTGAPVSTESTVPASDRRS.

Residues 1 to 21 traverse the membrane as a helical segment; it reads MLGFGPFELILIVVIIALLFG. Residues 36-47 are compositionally biased toward basic and acidic residues; the sequence is IKEFKQEMHEPS. The interval 36 to 82 is disordered; sequence IKEFKQEMHEPSPPRPQVTDIPSQRLDPVTGAPVSTESTVPASDRRS.

Belongs to the TatA/E family. In terms of assembly, forms a complex with TatC.

The protein localises to the cell membrane. In terms of biological role, part of the twin-arginine translocation (Tat) system that transports large folded proteins containing a characteristic twin-arginine motif in their signal peptide across membranes. TatA could form the protein-conducting channel of the Tat system. The protein is Sec-independent protein translocase protein TatA of Deinococcus deserti (strain DSM 17065 / CIP 109153 / LMG 22923 / VCD115).